The sequence spans 348 residues: MQNNLNLHRTLLGIAAVIIILAGVKLAAEIVVPFLLSLFIAIICSPIIKAMTQRRVPHWLAITLLFVLISLVFFFLVGLINSTAREFTQSIPQYKVLLSQRVSDLTGLLQRFNLPFTLSRETIQENFDPSIIMNFVSRVLLNFSGVVSNVFVLVLVVIFMLAEAPTMKHKFAMVISSTPHDVAKEERHIDRVLQGVIGYLGIKSITSLLTGVGVFILLEACRVQYAILWATLSFLLNYIPNIGSIIAAIPIIVQALLLNGFGIGFGVAIGVIAINMVVGNIIEPKMMGQRLGLSTLVVFLSLLFWGWLLGTVGMLLSVPLTMALKIALESSPNTAKYACLLGDVEDFK.

9 helical membrane passes run 7–27 (LHRTLLGIAAVIIILAGVKLA), 28–48 (AEIVVPFLLSLFIAIICSPII), 60–80 (LAITLLFVLISLVFFFLVGLI), 139–159 (VLLNFSGVVSNVFVLVLVVIF), 196–216 (VIGYLGIKSITSLLTGVGVFI), 223–243 (VQYAILWATLSFLLNYIPNIG), 245–265 (IIAAIPIIVQALLLNGFGIGF), 267–287 (VAIGVIAINMVVGNIIEPKMM), and 296–316 (LVVFLSLLFWGWLLGTVGMLL).

It belongs to the autoinducer-2 exporter (AI-2E) (TC 2.A.86) family.

The protein localises to the cell membrane. The chain is Putative transport protein HI_0338 from Haemophilus influenzae (strain ATCC 51907 / DSM 11121 / KW20 / Rd).